Reading from the N-terminus, the 244-residue chain is MSGPQGSDPRQPWQPPGQGADHSSDPTVAAGYPWQQQPTQEATWQAPAYTPQYQQPADPAYPQQYPQPTPGYAQPEQFGAQPTQLGVPGQYGQYQQPGQYGQPGQYGQPGQYAPPGQYPGQYGPYGQSGQGSKRSVAVIGGVIAVMAVLFIGAVLILGFWAPGFFVTTKLDVIKAQAGVQQVLTDETTGYGAKNVKDVKCNNGSDPTVKKGATFECTVSIDGTSKRVTVTFQDNKGTYEVGRPQ.

The interval 1-127 is disordered; it reads MSGPQGSDPR…YPGQYGPYGQ (127 aa). The span at 34 to 43 shows a compositional bias: polar residues; the sequence is WQQQPTQEAT. Composition is skewed to low complexity over residues 45–75 and 88–127; these read QAPA…YAQP and PGQY…PYGQ. Residues 136–156 traverse the membrane as a helical segment; it reads VAVIGGVIAVMAVLFIGAVLI.

The protein localises to the membrane. This is an uncharacterized protein from Mycobacterium tuberculosis (strain CDC 1551 / Oshkosh).